The chain runs to 154 residues: Fimbrial protein (154 aa).

A propeptide spans 1 to 6 (MKAQKG) (leader sequence). An N-methylphenylalanine modification is found at F7. Residues 7 to 27 (FTLIELMIVVAIIGILAAIAI) traverse the membrane as a helical segment. C133 and C151 form a disulfide bridge.

The protein belongs to the N-Me-Phe pilin family. The pili are polar flexible filaments of about 5.4 nanometers diameter and 2.5 micrometers average length; they consist of only a single polypeptide chain arranged in a helical configuration of five subunits per turn in the assembled pilus.

The protein resides in the fimbrium. Its subcellular location is the membrane. The sequence is that of Fimbrial protein (pilA) from Pseudomonas aeruginosa.